Consider the following 89-residue polypeptide: Extender of the chronological lifespan protein ecl3 (89 aa).

Belongs to the ecl1 family.

The protein resides in the nucleus. Its function is as follows. Involved in chronological cell aging. The sequence is that of Extender of the chronological lifespan protein ecl3 (ecl3) from Schizosaccharomyces pombe (strain 972 / ATCC 24843) (Fission yeast).